A 294-amino-acid chain; its full sequence is Cytidine deaminase (294 aa).

CMP/dCMP-type deaminase domains are found at residues 48–168 and 187–294; these read DDDA…FGPT and AETD…RVTF. 89 to 91 lines the substrate pocket; it reads NME. Position 102 (histidine 102) interacts with Zn(2+). Glutamate 104 (proton donor) is an active-site residue. 2 residues coordinate Zn(2+): cysteine 129 and cysteine 132.

This sequence belongs to the cytidine and deoxycytidylate deaminase family. In terms of assembly, homodimer. Zn(2+) serves as cofactor.

The enzyme catalyses cytidine + H2O + H(+) = uridine + NH4(+). The catalysed reaction is 2'-deoxycytidine + H2O + H(+) = 2'-deoxyuridine + NH4(+). Its function is as follows. This enzyme scavenges exogenous and endogenous cytidine and 2'-deoxycytidine for UMP synthesis. This chain is Cytidine deaminase, found in Yersinia pseudotuberculosis serotype IB (strain PB1/+).